Here is a 406-residue protein sequence, read N- to C-terminus: Serine hydroxymethyltransferase (406 aa).

(6S)-5,6,7,8-tetrahydrofolate is bound by residues leucine 111 and 115-117 (GHL). An N6-(pyridoxal phosphate)lysine modification is found at lysine 220. 340 to 342 (SAF) serves as a coordination point for (6S)-5,6,7,8-tetrahydrofolate.

The protein belongs to the SHMT family. In terms of assembly, homodimer. Pyridoxal 5'-phosphate serves as cofactor.

The protein localises to the cytoplasm. The enzyme catalyses (6R)-5,10-methylene-5,6,7,8-tetrahydrofolate + glycine + H2O = (6S)-5,6,7,8-tetrahydrofolate + L-serine. The protein operates within one-carbon metabolism; tetrahydrofolate interconversion. It participates in amino-acid biosynthesis; glycine biosynthesis; glycine from L-serine: step 1/1. Its function is as follows. Catalyzes the reversible interconversion of serine and glycine with tetrahydrofolate (THF) serving as the one-carbon carrier. This reaction serves as the major source of one-carbon groups required for the biosynthesis of purines, thymidylate, methionine, and other important biomolecules. Also exhibits THF-independent aldolase activity toward beta-hydroxyamino acids, producing glycine and aldehydes, via a retro-aldol mechanism. The sequence is that of Serine hydroxymethyltransferase from Mycoplasma genitalium (strain ATCC 33530 / DSM 19775 / NCTC 10195 / G37) (Mycoplasmoides genitalium).